Here is a 220-residue protein sequence, read N- to C-terminus: Splicing factor U2AF 26 kDa subunit (220 aa).

The residue at position 2 (A2) is an N-acetylalanine. A C3H1-type 1 zinc finger spans residues 12–40 (EKDKVNCSFYFKIGACRHGDRCSRLHNKP). One can recognise an RRM domain in the interval 65 to 147 (SHCHVSDVEV…QAVHAELSPV (83 aa)). The segment at 149 to 176 (DFRESCCRQYEMGECTRGGFCNFMHLRP) adopts a C3H1-type 2 zinc-finger fold. Residues 186–220 (YGRGPRHRSPPRSHTGHRPRERNRRRSPDHRHGRF) form a disordered region. A compositionally biased stretch (basic residues) spans 189-220 (GPRHRSPPRSHTGHRPRERNRRRSPDHRHGRF).

It belongs to the splicing factor SR family. Interacts with GFI1, U2AF2 and C1QBP. Isoform 3 interacts with PER1. Post-translationally, isoform 3 is rapidly degraded by a proteasome-mediated degradation pathway. In terms of tissue distribution, ubiquitous. Highly expressed in the brain.

The protein resides in the nucleus. The protein localises to the nucleus speckle. It is found in the cytoplasm. Its function is as follows. RNA-binding protein that function as a pre-mRNA splicing factor. Plays a critical role in both constitutive and enhancer-dependent splicing by mediating protein-protein interactions and protein-RNA interactions required for accurate 3'-splice site selection. It can functionally substitute for U2AF1 in constitutive splicing and enhancer-dependent splicing. Acts by enhancing the binding of U2AF2 to weak pyrimidine tracts. Also participates in the regulation of alternative pre-mRNA splicing. Activates exon 5 skipping of PTPRC during T-cell activation; an event reversed by GFI1. Binds to RNA at the AG dinucleotide at the 3'-splice site. Shows a preference for AGC or AGA. Alternative splicing of U2AF1L4 may play a role in connecting the circadian rhythm to changing external cues: may provide a circadian buffering system in central and periphery clocks that allows synchronized adaption to clock-resetting stimuli in order to prevent potentially pathogenic desynchronization. This chain is Splicing factor U2AF 26 kDa subunit (U2af1l4), found in Mus musculus (Mouse).